Here is a 503-residue protein sequence, read N- to C-terminus: Opine oxidase subunit A (503 aa).

It to T-protein and to dimethylglycine dehydrogenase. In terms of assembly, heterodimer of a subunit A and a subunit B.

It functions in the pathway opine metabolism; octopine degradation. Its function is as follows. Oxidative cleavage of octopine into L-arginine and pyruvate. The sequence is that of Opine oxidase subunit A (ooxA) from Agrobacterium tumefaciens (strain Ach5).